The primary structure comprises 290 residues: UPF0761 membrane protein YihY (290 aa).

Transmembrane regions (helical) follow at residues 44 to 64 (LLSL…FPMF), 104 to 124 (VGAC…DSAL), 140 to 160 (FAVY…SLAI), 183 to 203 (ILPL…VPTT), 210 to 230 (ALVG…GFAL), and 244 to 264 (VLAV…IVLL).

This sequence belongs to the UPF0761 family.

The protein resides in the cell inner membrane. The chain is UPF0761 membrane protein YihY from Salmonella paratyphi B (strain ATCC BAA-1250 / SPB7).